A 100-amino-acid chain; its full sequence is Co-chaperonin GroES (100 aa).

This sequence belongs to the GroES chaperonin family. Heptamer of 7 subunits arranged in a ring. Interacts with the chaperonin GroEL.

The protein resides in the cytoplasm. Together with the chaperonin GroEL, plays an essential role in assisting protein folding. The GroEL-GroES system forms a nano-cage that allows encapsulation of the non-native substrate proteins and provides a physical environment optimized to promote and accelerate protein folding. GroES binds to the apical surface of the GroEL ring, thereby capping the opening of the GroEL channel. The chain is Co-chaperonin GroES from Mycobacterium tuberculosis (strain CDC 1551 / Oshkosh).